We begin with the raw amino-acid sequence, 270 residues long: Putative pyruvate, phosphate dikinase regulatory protein 1 (270 aa).

Residue 151–158 coordinates ADP; that stretch reads GVSRTSKT.

Belongs to the pyruvate, phosphate/water dikinase regulatory protein family. PDRP subfamily.

It catalyses the reaction N(tele)-phospho-L-histidyl/L-threonyl-[pyruvate, phosphate dikinase] + ADP = N(tele)-phospho-L-histidyl/O-phospho-L-threonyl-[pyruvate, phosphate dikinase] + AMP + H(+). The enzyme catalyses N(tele)-phospho-L-histidyl/O-phospho-L-threonyl-[pyruvate, phosphate dikinase] + phosphate + H(+) = N(tele)-phospho-L-histidyl/L-threonyl-[pyruvate, phosphate dikinase] + diphosphate. Bifunctional serine/threonine kinase and phosphorylase involved in the regulation of the pyruvate, phosphate dikinase (PPDK) by catalyzing its phosphorylation/dephosphorylation. The polypeptide is Putative pyruvate, phosphate dikinase regulatory protein 1 (Enterococcus faecalis (strain ATCC 700802 / V583)).